Here is a 177-residue protein sequence, read N- to C-terminus: N-acetylmuramoyl-L-alanine amidase A (177 aa).

The region spanning 23-158 is the N-acetylmuramoyl-L-alanine amidase domain; that stretch reads QTSAVIMHTM…SGNENRYDPG (136 aa). Cysteine 114 and cysteine 121 are oxidised to a cystine.

It localises to the secreted. The catalysed reaction is Hydrolyzes the link between N-acetylmuramoyl residues and L-amino acid residues in certain cell-wall glycopeptides.. Its function is as follows. Antibacterial activity against Gram-positive bacteria M.luteus, S.aureus, E.faecalis and P.acidilactici and Gram-negative bacterium E.coli. This is N-acetylmuramoyl-L-alanine amidase A (cwhA) from Achromobacter lyticus.